We begin with the raw amino-acid sequence, 343 residues long: Palmitoyltransferase ZDHHC4 (343 aa).

The Lumenal portion of the chain corresponds to 1–2 (MD). The chain crosses the membrane as a helical span at residues 3–23 (FLVLFLFYLAFLLICVVLICI). Residues 24 to 67 (FTKSQRLKAVVLGGAQVCSRVIPQCLQRAVQTLLHQLFHTRHPT) are Cytoplasmic-facing. Residues 68 to 88 (FIVLHLLLQGLVYAEYTCEVF) traverse the membrane as a helical segment. Residues 89–100 (GYCRELEFSLPY) are Lumenal-facing. Residues 101-121 (LLLPYVLLSVNLVFFTLTCAA) form a helical membrane-spanning segment. The Cytoplasmic segment spans residues 122–193 (NPGTITKANE…NCIGAWNTRY (72 aa)). The DHHC domain maps to 149 to 199 (SRCPTCDLRKPARSKHCRLCDRCVHRFDHHCVWVNNCIGAWNTRYFLIYLL). Cysteine 179 acts as the S-palmitoyl cysteine intermediate in catalysis. A helical membrane pass occupies residues 194-214 (FLIYLLTLTASAATIATVTAA). The Lumenal segment spans residues 215–255 (FLLRLVTVSDLYQETYLDDVGHFQAVDTVFLIQHLFLAFPR). Residues 256-276 (IVFLLGFVIVLSMLLAGYLCF) form a helical membrane-spanning segment. The Cytoplasmic portion of the chain corresponds to 277 to 343 (ALYLAATNQT…ATPSYKKKEK (67 aa)). A Di-lysine motif motif is present at residues 340-343 (KKEK).

Belongs to the DHHC palmitoyltransferase family. Interacts with CPT1A.

It is found in the endoplasmic reticulum membrane. It localises to the golgi apparatus membrane. The protein resides in the cell membrane. The enzyme catalyses L-cysteinyl-[protein] + hexadecanoyl-CoA = S-hexadecanoyl-L-cysteinyl-[protein] + CoA. Palmitoyltransferase that could catalyze the addition of palmitate onto protein substrates including the D(2) dopamine receptor DRD2, GSK3B or MAVS. Mediates GSK3B palmitoylation to prevent its AKT1-mediated phosphorylation leading to activation of the STAT3 signaling pathway. Also catalyzes MAVS palmitoylation which promotes its stabilization and activation by inhibiting 'Lys-48'- but facilitating 'Lys-63'-linked ubiquitination. The sequence is that of Palmitoyltransferase ZDHHC4 from Mus musculus (Mouse).